The primary structure comprises 332 residues: Fructose-1,6-bisphosphatase class 1 (332 aa).

Residues Glu-89, Asp-110, Leu-112, and Asp-113 each contribute to the Mg(2+) site. Residues 113 to 116 (DGSS), Asn-206, Tyr-239, 257 to 259 (YLY), and Lys-269 each bind substrate. Position 275 (Glu-275) interacts with Mg(2+).

The protein belongs to the FBPase class 1 family. Homotetramer. The cofactor is Mg(2+).

The protein localises to the cytoplasm. The enzyme catalyses beta-D-fructose 1,6-bisphosphate + H2O = beta-D-fructose 6-phosphate + phosphate. It participates in carbohydrate biosynthesis; gluconeogenesis. In Cronobacter sakazakii (strain ATCC BAA-894) (Enterobacter sakazakii), this protein is Fructose-1,6-bisphosphatase class 1.